A 415-amino-acid polypeptide reads, in one-letter code: Histidine--tRNA ligase (415 aa).

The protein belongs to the class-II aminoacyl-tRNA synthetase family. In terms of assembly, homodimer.

The protein localises to the cytoplasm. It carries out the reaction tRNA(His) + L-histidine + ATP = L-histidyl-tRNA(His) + AMP + diphosphate + H(+). This is Histidine--tRNA ligase from Rickettsia felis (strain ATCC VR-1525 / URRWXCal2) (Rickettsia azadi).